The chain runs to 152 residues: 6,7-dimethyl-8-ribityllumazine synthase (152 aa).

Residues phenylalanine 21, 55 to 57 (AFE), and 79 to 81 (CVI) contribute to the 5-amino-6-(D-ribitylamino)uracil site. Residue 84–85 (ST) coordinates (2S)-2-hydroxy-3-oxobutyl phosphate. The Proton donor role is filled by histidine 87. Phenylalanine 112 serves as a coordination point for 5-amino-6-(D-ribitylamino)uracil. Residue arginine 126 participates in (2S)-2-hydroxy-3-oxobutyl phosphate binding.

This sequence belongs to the DMRL synthase family. In terms of assembly, forms an icosahedral capsid composed of 60 subunits, arranged as a dodecamer of pentamers.

The enzyme catalyses (2S)-2-hydroxy-3-oxobutyl phosphate + 5-amino-6-(D-ribitylamino)uracil = 6,7-dimethyl-8-(1-D-ribityl)lumazine + phosphate + 2 H2O + H(+). Its pathway is cofactor biosynthesis; riboflavin biosynthesis; riboflavin from 2-hydroxy-3-oxobutyl phosphate and 5-amino-6-(D-ribitylamino)uracil: step 1/2. Its function is as follows. Catalyzes the formation of 6,7-dimethyl-8-ribityllumazine by condensation of 5-amino-6-(D-ribitylamino)uracil with 3,4-dihydroxy-2-butanone 4-phosphate. This is the penultimate step in the biosynthesis of riboflavin. The chain is 6,7-dimethyl-8-ribityllumazine synthase from Staphylococcus saprophyticus subsp. saprophyticus (strain ATCC 15305 / DSM 20229 / NCIMB 8711 / NCTC 7292 / S-41).